Here is a 102-residue protein sequence, read N- to C-terminus: Small ribosomal subunit protein uS10 (102 aa).

Belongs to the universal ribosomal protein uS10 family. Part of the 30S ribosomal subunit.

Its function is as follows. Involved in the binding of tRNA to the ribosomes. This chain is Small ribosomal subunit protein uS10, found in Methanothrix thermoacetophila (strain DSM 6194 / JCM 14653 / NBRC 101360 / PT) (Methanosaeta thermophila).